A 486-amino-acid polypeptide reads, in one-letter code: Argininosuccinate lyase (486 aa).

This sequence belongs to the lyase 1 family. Argininosuccinate lyase subfamily.

Its subcellular location is the cytoplasm. It carries out the reaction 2-(N(omega)-L-arginino)succinate = fumarate + L-arginine. The protein operates within amino-acid biosynthesis; L-arginine biosynthesis; L-arginine from L-ornithine and carbamoyl phosphate: step 3/3. In Acidovorax ebreus (strain TPSY) (Diaphorobacter sp. (strain TPSY)), this protein is Argininosuccinate lyase.